The primary structure comprises 368 residues: Protein L-Myc (368 aa).

Disordered stretches follow at residues 39 to 79 (PPTS…RGHS), 112 to 179 (RLAP…EKRR), and 218 to 295 (FPPE…FLER). Residues 135 to 147 (LEASNPAPATQCQ) are compositionally biased toward polar residues. Over residues 247 to 258 (EEEEEEEEEEEI) the composition is skewed to acidic residues. The span at 283–294 (DVTKRKNHNFLE) shows a compositional bias: basic and acidic residues. One can recognise a bHLH domain in the interval 285–337 (TKRKNHNFLERKRRNDLRSRFLALRDQVPTLASCSKAPKVVILSKALEYLQAL). A leucine-zipper region spans residues 337–365 (LVGAEKKMATEKRQLRCRQQQLQKRIAYL).

Efficient DNA binding requires dimerization with another bHLH protein. Binds DNA as a heterodimer with MAX.

The protein resides in the nucleus. This is Protein L-Myc (Mycl) from Mus musculus (Mouse).